The primary structure comprises 203 residues: Outer-membrane lipoprotein carrier protein (203 aa).

Positions 1-21 (MKKLILIGCLMAGMNINVAWA) are cleaved as a signal peptide.

This sequence belongs to the LolA family. In terms of assembly, monomer.

Its subcellular location is the periplasm. Its function is as follows. Participates in the translocation of lipoproteins from the inner membrane to the outer membrane. Only forms a complex with a lipoprotein if the residue after the N-terminal Cys is not an aspartate (The Asp acts as a targeting signal to indicate that the lipoprotein should stay in the inner membrane). The sequence is that of Outer-membrane lipoprotein carrier protein from Photorhabdus laumondii subsp. laumondii (strain DSM 15139 / CIP 105565 / TT01) (Photorhabdus luminescens subsp. laumondii).